We begin with the raw amino-acid sequence, 362 residues long: Ferrochelatase (362 aa).

Fe cation is bound by residues His-228 and Glu-309.

It belongs to the ferrochelatase family.

The protein resides in the cytoplasm. The catalysed reaction is heme b + 2 H(+) = protoporphyrin IX + Fe(2+). It participates in porphyrin-containing compound metabolism; protoheme biosynthesis; protoheme from protoporphyrin-IX: step 1/1. Its function is as follows. Catalyzes the ferrous insertion into protoporphyrin IX. The polypeptide is Ferrochelatase (Bordetella pertussis (strain Tohama I / ATCC BAA-589 / NCTC 13251)).